Here is a 336-residue protein sequence, read N- to C-terminus: Dihydroorotate dehydrogenase (quinone) (336 aa).

FMN-binding positions include 62–66 (AGLDK) and T86. A substrate-binding site is contributed by K66. Position 111 to 115 (111 to 115 (NRMGF)) interacts with substrate. Residues N139 and N172 each coordinate FMN. N172 contacts substrate. S175 functions as the Nucleophile in the catalytic mechanism. N177 serves as a coordination point for substrate. Positions 217 and 245 each coordinate FMN. 246-247 (NT) is a binding site for substrate. FMN is bound by residues G268, G297, and 318-319 (YT).

This sequence belongs to the dihydroorotate dehydrogenase family. Type 2 subfamily. In terms of assembly, monomer. Requires FMN as cofactor.

The protein localises to the cell membrane. The enzyme catalyses (S)-dihydroorotate + a quinone = orotate + a quinol. The protein operates within pyrimidine metabolism; UMP biosynthesis via de novo pathway; orotate from (S)-dihydroorotate (quinone route): step 1/1. Its function is as follows. Catalyzes the conversion of dihydroorotate to orotate with quinone as electron acceptor. The sequence is that of Dihydroorotate dehydrogenase (quinone) from Vibrio parahaemolyticus serotype O3:K6 (strain RIMD 2210633).